The chain runs to 111 residues: MNKCNLLVQILQCKSVKTTSNENQIIKLKARFKKRNKVVAIDLLIWNRQSLEIFKLLKKFDYIIIEGKLHRSETTDIKLMLNQQKDLVFSTSRIFKYKSLLKNKDIDLFIK.

Residues 1–98 (MNKCNLLVQI…FSTSRIFKYK (98 aa)) enclose the SSB domain.

Its subcellular location is the plastid. It is found in the chloroplast. The protein is Putative single-stranded DNA-binding protein ycf41 (ycf41) of Porphyra purpurea (Red seaweed).